Reading from the N-terminus, the 219-residue chain is Thiamine-phosphate synthase (219 aa).

Residues Q44 to K48 and N79 contribute to the 4-amino-2-methyl-5-(diphosphooxymethyl)pyrimidine site. Mg(2+) is bound by residues D80 and D99. S117 is a binding site for 4-amino-2-methyl-5-(diphosphooxymethyl)pyrimidine. T143–T145 contacts 2-[(2R,5Z)-2-carboxy-4-methylthiazol-5(2H)-ylidene]ethyl phosphate. 4-amino-2-methyl-5-(diphosphooxymethyl)pyrimidine is bound at residue K146. 2-[(2R,5Z)-2-carboxy-4-methylthiazol-5(2H)-ylidene]ethyl phosphate is bound by residues G175 and I195–S196.

The protein belongs to the thiamine-phosphate synthase family. Mg(2+) is required as a cofactor.

It carries out the reaction 2-[(2R,5Z)-2-carboxy-4-methylthiazol-5(2H)-ylidene]ethyl phosphate + 4-amino-2-methyl-5-(diphosphooxymethyl)pyrimidine + 2 H(+) = thiamine phosphate + CO2 + diphosphate. The catalysed reaction is 2-(2-carboxy-4-methylthiazol-5-yl)ethyl phosphate + 4-amino-2-methyl-5-(diphosphooxymethyl)pyrimidine + 2 H(+) = thiamine phosphate + CO2 + diphosphate. It catalyses the reaction 4-methyl-5-(2-phosphooxyethyl)-thiazole + 4-amino-2-methyl-5-(diphosphooxymethyl)pyrimidine + H(+) = thiamine phosphate + diphosphate. The protein operates within cofactor biosynthesis; thiamine diphosphate biosynthesis; thiamine phosphate from 4-amino-2-methyl-5-diphosphomethylpyrimidine and 4-methyl-5-(2-phosphoethyl)-thiazole: step 1/1. Its function is as follows. Condenses 4-methyl-5-(beta-hydroxyethyl)thiazole monophosphate (THZ-P) and 2-methyl-4-amino-5-hydroxymethyl pyrimidine pyrophosphate (HMP-PP) to form thiamine monophosphate (TMP). The protein is Thiamine-phosphate synthase of Bacillus cereus (strain AH820).